A 334-amino-acid chain; its full sequence is Heat shock factor 2-binding protein (334 aa).

The interval 14–51 (MGTKEEFVKVRKKDLERLTTEVMQIRDFLPRILNGEVL) is interaction with BRME1. Positions 49–122 (EVLESFQKLK…LLQQAEYCTE (74 aa)) form a coiled coil. Positions 83 to 334 (ARLETVQADN…EDLRTLEHNV (252 aa)) are interaction with BRCA2.

As to quaternary structure, associates with HSF2. The interaction seems to occur between the trimerization domain of HSF2 and the N-terminal hydrophilic region of HSF2BP. Interacts (via C-terminus) with BNC1. Interacts (via N-terminus) with BRCA2 and BRME1; the interactions are direct and allow the formation of a ternary complex. The complex BRME1:HSF2BP:BRCA2 interacts with SPATA22, MEIOB and RAD51. Post-translationally, sumoylated by UBE2I in response to MEKK1-mediated stimuli. As to expression, testis specific. Overexpressed in some tumors.

The protein localises to the cytoplasm. The protein resides in the chromosome. Functionally, meiotic recombination factor component of recombination bridges involved in meiotic double-strand break repair. Modulates the localization of recombinases DMC1:RAD51 to meiotic double-strand break (DSB) sites through the interaction with BRCA2 and its recruitment during meiotic recombination. Indispensable for the DSB repair, homologous synapsis, and crossover formation that are needed for progression past metaphase I, is essential for spermatogenesis and male fertility. Required for proper recombinase recruitment in female meiosis. Inhibits BNC1 transcriptional activity during spermatogenesis, probably by sequestering it in the cytoplasm. May be involved in modulating HSF2 activation in testis. The chain is Heat shock factor 2-binding protein from Homo sapiens (Human).